The following is a 321-amino-acid chain: MIIMNGPWVEKYRPQKLDDIVGQEHIIPRLKRYVEEKSMPNLMFTGPAGVGKTTAALALAREILGEYWRQNFLELNASDARGIDTVRTSIKNFCRLKPVGAPFRIIFLDEVDNMTKDAQHALRREMEMYTKTSSFILSCNYSSKIIDPIQSRCAIFRFLPLKGHQIIKRLEYIAEKENLEYEAHALETIVYFAEGDLRKAINLLQSAASLGEKITESSIYDVVSRARPKDVRKMIKTILDGKFMEARDMLREIMVLQGISGEDMVTQIYQELSRLAMEGEVDGDRYVGLIDAIGEYDFRIREGANPRIQLEALLARFLEHA.

Residue 46-53 (GPAGVGKT) coordinates ATP.

The protein belongs to the activator 1 small subunits family. RfcS subfamily. As to quaternary structure, heterohexamer composed of four small subunits (RfcS) and two large subunits (RfcL).

Part of the RFC clamp loader complex which loads the PCNA sliding clamp onto DNA. The complex possesses DNA-dependent ATPase activity which is further stimulated by PCNA. In conjunction with PCNA stimulates DNA synthesis by PolB, relieving inhibition by replication protein A (RPA). This Methanothermobacter thermautotrophicus (strain ATCC 29096 / DSM 1053 / JCM 10044 / NBRC 100330 / Delta H) (Methanobacterium thermoautotrophicum) protein is Replication factor C small subunit (rfcS).